We begin with the raw amino-acid sequence, 254 residues long: 4-hydroxy-tetrahydrodipicolinate reductase (254 aa).

NAD(+) is bound by residues 8-13, Asp-35, 86-88, and 110-113; these read GCSGKM, CST, and SANM. The active-site Proton donor/acceptor is His-143. Position 144 (His-144) interacts with (S)-2,3,4,5-tetrahydrodipicolinate. The active-site Proton donor is the Lys-147. 153-154 contacts (S)-2,3,4,5-tetrahydrodipicolinate; the sequence is GT.

Belongs to the DapB family.

It localises to the cytoplasm. It carries out the reaction (S)-2,3,4,5-tetrahydrodipicolinate + NAD(+) + H2O = (2S,4S)-4-hydroxy-2,3,4,5-tetrahydrodipicolinate + NADH + H(+). The catalysed reaction is (S)-2,3,4,5-tetrahydrodipicolinate + NADP(+) + H2O = (2S,4S)-4-hydroxy-2,3,4,5-tetrahydrodipicolinate + NADPH + H(+). Its pathway is amino-acid biosynthesis; L-lysine biosynthesis via DAP pathway; (S)-tetrahydrodipicolinate from L-aspartate: step 4/4. Functionally, catalyzes the conversion of 4-hydroxy-tetrahydrodipicolinate (HTPA) to tetrahydrodipicolinate. This Clostridium perfringens (strain ATCC 13124 / DSM 756 / JCM 1290 / NCIMB 6125 / NCTC 8237 / Type A) protein is 4-hydroxy-tetrahydrodipicolinate reductase.